Consider the following 510-residue polypeptide: MIELTVAQIAEIVGGAVADISPQDAAHRRVTGTVEFDSRAIGPGGLFLRLPGARADGHDHAASAVAAGAAVVLAARPVGVPAIVVPPVAAPNVLAGVLEHDNDGSGAAVLAALAKLATAVAAQLVAGGLTIIGITGSSGKTSTKDLMAAVLAPLGEVVAPPGSFNNELGHPWTVLRATRRTDYLILEMAARHHGNIAALAEIAPPSIGVVLNVGTAHLGEFGSREVIAQTKAELPQAVPHSGAVVLNADDPAVAAMAKLTAARVVRVSRDNTGDVWAGPVSLDELARPRFTLHAHDAQAEVRLGVCGDHQVTNALCAAAVALECGASVEQVAAALTAAPPVSRHRMQVTTRGDGVTVIDDAYNANPDSMRAGLQALAWIAHQPEATRRSWAVLGEMAELGEDAIAEHDRIGRLAVRLDVSRLVVVGTGRSISAMHHGAVLEEAWGSGEATADHGADRTAVNVADGDAALALLRAELRPGDVVLVKASNAAGLGAVADALVADDTCGSVRP.

Residue 136-142 (GSSGKTS) participates in ATP binding.

The protein belongs to the MurCDEF family. MurF subfamily.

Its subcellular location is the cytoplasm. The catalysed reaction is D-alanyl-D-alanine + UDP-N-acetyl-alpha-D-muramoyl-L-alanyl-gamma-D-glutamyl-meso-2,6-diaminopimelate + ATP = UDP-N-acetyl-alpha-D-muramoyl-L-alanyl-gamma-D-glutamyl-meso-2,6-diaminopimeloyl-D-alanyl-D-alanine + ADP + phosphate + H(+). Its pathway is cell wall biogenesis; peptidoglycan biosynthesis. Its function is as follows. Involved in cell wall formation. Catalyzes the final step in the synthesis of UDP-N-acetylmuramoyl-pentapeptide, the precursor of murein. The chain is UDP-N-acetylmuramoyl-tripeptide--D-alanyl-D-alanine ligase from Mycobacterium tuberculosis (strain CDC 1551 / Oshkosh).